The following is a 205-amino-acid chain: ATP-dependent Clp protease proteolytic subunit (205 aa).

The Nucleophile role is filled by Ser-107. His-132 is a catalytic residue.

Belongs to the peptidase S14 family. As to quaternary structure, fourteen ClpP subunits assemble into 2 heptameric rings which stack back to back to give a disk-like structure with a central cavity, resembling the structure of eukaryotic proteasomes.

The protein resides in the cytoplasm. It carries out the reaction Hydrolysis of proteins to small peptides in the presence of ATP and magnesium. alpha-casein is the usual test substrate. In the absence of ATP, only oligopeptides shorter than five residues are hydrolyzed (such as succinyl-Leu-Tyr-|-NHMec, and Leu-Tyr-Leu-|-Tyr-Trp, in which cleavage of the -Tyr-|-Leu- and -Tyr-|-Trp bonds also occurs).. Its function is as follows. Cleaves peptides in various proteins in a process that requires ATP hydrolysis. Has a chymotrypsin-like activity. Plays a major role in the degradation of misfolded proteins. This chain is ATP-dependent Clp protease proteolytic subunit, found in Pseudoalteromonas translucida (strain TAC 125).